Here is a 2867-residue protein sequence, read N- to C-terminus: Reticulocyte-binding protein 2 (2867 aa).

The first 21 residues, 1-21, serve as a signal peptide directing secretion; it reads MEKNVLWVIFYNFLVILLASC. The Extracellular portion of the chain corresponds to 22 to 2805; sequence NDSNRSKSNS…TAKEAIGKTR (2784 aa). Disordered stretches follow at residues 52–73, 2650–2682, and 2712–2799; these read KYNN…NNHN, ETKT…ASVP, and DNTH…TAKE. Over residues 61 to 73 the composition is skewed to low complexity; the sequence is NIGNQINNDNNHN. Residues 2659-2674 are compositionally biased toward basic and acidic residues; it reads KAKEEKVPPKETENRA. Residues 2725–2736 are compositionally biased toward polar residues; that stretch reads DSISAPQEQVEY. Residues 2743–2754 show a composition bias toward acidic residues; it reads ENDETTEEESEH. Residues 2755–2799 show a composition bias toward basic and acidic residues; the sequence is DDAHDDTHDDTHDDTHDDTHDDTHDDTHDDTHDESQTGRDSTAKE. Repeat copies occupy residues 2758 to 2761, 2762 to 2765, 2766 to 2769, 2770 to 2773, 2774 to 2777, 2778 to 2781, and 2782 to 2785. Positions 2758 to 2785 are 7 X 4 AA tandem repeats of H-D-D-T; the sequence is HDDTHDDTHDDTHDDTHDDTHDDTHDDT. The helical transmembrane segment at 2806–2826 threads the bilayer; it reads LAGAVIIAMSVLSGFIIIVFK. The Cytoplasmic portion of the chain corresponds to 2827–2867; sequence DKDEEEKDHNEHGYNEAFGEHDEYNMHDKEEVIEVCFNEED.

The protein localises to the cell membrane. Its function is as follows. Involved in reticulocyte adhesion. Specifically binds to human reticulocyte cells. In Plasmodium vivax (strain Belem), this protein is Reticulocyte-binding protein 2 (RBP-2).